Consider the following 293-residue polypeptide: 33 kDa chaperonin (293 aa).

2 cysteine pairs are disulfide-bonded: Cys237–Cys239 and Cys271–Cys274.

Belongs to the HSP33 family. Post-translationally, under oxidizing conditions two disulfide bonds are formed involving the reactive cysteines. Under reducing conditions zinc is bound to the reactive cysteines and the protein is inactive.

The protein localises to the cytoplasm. Redox regulated molecular chaperone. Protects both thermally unfolding and oxidatively damaged proteins from irreversible aggregation. Plays an important role in the bacterial defense system toward oxidative stress. This chain is 33 kDa chaperonin, found in Haemophilus influenzae (strain 86-028NP).